Reading from the N-terminus, the 382-residue chain is Mannitol-1-phosphate 5-dehydrogenase (382 aa).

Residue 3–14 coordinates NAD(+); it reads ALHFGAGNIGRG.

The protein belongs to the mannitol dehydrogenase family.

It catalyses the reaction D-mannitol 1-phosphate + NAD(+) = beta-D-fructose 6-phosphate + NADH + H(+). The protein is Mannitol-1-phosphate 5-dehydrogenase of Klebsiella pneumoniae (strain 342).